Here is a 239-residue protein sequence, read N- to C-terminus: 7-cyano-7-deazaguanine synthase (239 aa).

13 to 23 (FSGGQDSTTCL) contacts ATP. Zn(2+) is bound by residues Cys-192, Cys-201, Cys-204, and Cys-207.

This sequence belongs to the QueC family. Requires Zn(2+) as cofactor.

The catalysed reaction is 7-carboxy-7-deazaguanine + NH4(+) + ATP = 7-cyano-7-deazaguanine + ADP + phosphate + H2O + H(+). Its pathway is purine metabolism; 7-cyano-7-deazaguanine biosynthesis. Its function is as follows. Catalyzes the ATP-dependent conversion of 7-carboxy-7-deazaguanine (CDG) to 7-cyano-7-deazaguanine (preQ(0)). This Shewanella sp. (strain MR-4) protein is 7-cyano-7-deazaguanine synthase.